The following is an 894-amino-acid chain: LRR receptor-like serine/threonine-protein kinase IOS1 (894 aa).

Residues 1–23 form the signal peptide; sequence MAFSSCFLLVLLQIFSALLLCLA. At 24–515 the chain is on the extracellular side; sequence QDQSGFISLD…KKKKNTVIAP (492 aa). N-linked (GlcNAc...) asparagine glycosylation is found at Asn48, Asn95, Asn137, Asn179, Asn223, Asn230, Asn260, Asn287, Asn309, Asn338, Asn399, Asn441, Asn462, and Asn469. LRR repeat units lie at residues 431-457 and 459-479; these read LTSLEVLDLSNNSLTGSVPEFLANMET and KLINLSGNELNGSIPATLLDK. The helical transmembrane segment at 516 to 536 threads the bilayer; the sequence is VAASLVSVFLIGAGIVTFLIL. The Cytoplasmic portion of the chain corresponds to 537–894; it reads KRKKRTKLGL…FTTELNPGAR (358 aa). Thr577 is modified (phosphothreonine). The Protein kinase domain occupies 586 to 858; that stretch reads NNFERVLGRG…QVVMDLKECL (273 aa). ATP contacts are provided by residues 592–600 and Lys613; that span reads LGRGGFGVV. The residue at position 658 (Tyr658) is a Phosphotyrosine. The active-site Proton acceptor is Asp710. At Ser744 the chain carries Phosphoserine. Residues Thr745 and Thr750 each carry the phosphothreonine modification. Phosphotyrosine is present on Tyr758.

Belongs to the protein kinase superfamily. Ser/Thr protein kinase family. Homodimerization. Interacts with BAK1 and FLS2; triggers FLS2-BAK1 complex formation upon microbe-associated molecular patterns (MAMPs) treatment. Also binds to CERK1 and EFR. Expressed in roots, cotyledons, leaves, flowers and siliques.

The protein localises to the cell membrane. Its function is as follows. Negatively regulates the abscisic acid (ABA) signaling pathway. Required for full susceptibility to filamentous (hemi)biotrophic oomycetes (e.g. H.arabidopsidis and P.parasitica) and fungal (e.g. E.cruciferarum) pathogens, probably by triggering the repression of ABA-sensitive COLD REGULATED and RESISTANCE TO DESICCATION genes during infection, but independently of immune responses. Involved in BAK1-dependent and BAK1-independent microbe-associated molecular patterns (MAMPs)-triggered immunity (PTI) leading to defense responses, including callose deposition and MAPK cascade activation, toward pathogenic bacteria (e.g. P.syringae). Required for chitin-mediated PTI. The chain is LRR receptor-like serine/threonine-protein kinase IOS1 from Arabidopsis thaliana (Mouse-ear cress).